A 270-amino-acid chain; its full sequence is G-box-binding factor 4 (270 aa).

The disordered stretch occupies residues 1 to 46 (MASFKLMSSSNSDLSRRNSSSASSSPSIRSSHHLRPNPHADHSRIS). Over residues 8-29 (SSSNSDLSRRNSSSASSSPSIR) the composition is skewed to low complexity. Serine 27 carries the post-translational modification Phosphoserine. The bZIP domain maps to 187–250 (AAQRQKRMIK…YKKLMEVLIP (64 aa)). The segment at 190–208 (RQKRMIKNRESAARSRERK) is basic motif. Positions 215–229 (LETLAAKLEEENEQL) are leucine-zipper. The disordered stretch occupies residues 250 to 270 (PVDEKPRPPSRPLSRSHSLEW). Positions 261 to 270 (PLSRSHSLEW) are enriched in low complexity.

It belongs to the bZIP family. In terms of assembly, DNA-binding heterodimer with GBF2 and GBF3; non DNA-binding homodimer.

It localises to the nucleus. Binds to the G-box motif (5'-CCACGTGG-3') of the rbcS-1A gene promoter. G-box and G-box-like motifs are cis-acting elements defined in promoters of certain plant genes which are regulated by such diverse stimuli as light-induction or hormone control. This chain is G-box-binding factor 4 (GBF4), found in Arabidopsis thaliana (Mouse-ear cress).